The chain runs to 1088 residues: Receptor-type guanylate cyclase gcy-17 (1088 aa).

Positions 1-20 (MLFLRLFIFTPFLILANCQA) are cleaved as a signal peptide. At 21–480 (RRTIKVGLLF…PPDFVRDYLV (460 aa)) the chain is on the extracellular side. 7 N-linked (GlcNAc...) asparagine glycosylation sites follow: Asn33, Asn235, Asn251, Asn321, Asn381, Asn419, and Asn434. A helical transmembrane segment spans residues 481 to 501 (IVIIIVMFLIFAVSAAVGAVF). Residues 502–1088 (YAIRQKRKEI…SMARSITPEI (587 aa)) are Cytoplasmic-facing. The tract at residues 529–552 (SKKSKSEASQRSFASGPSTSTKLT) is disordered. The span at 535–552 (EASQRSFASGPSTSTKLT) shows a compositional bias: polar residues. The Protein kinase domain occupies 535–824 (EASQRSFASG…KGNLMDHVFN (290 aa)). Residues 826–854 (LETYASTLEEEVNERTKELVEEQKKSDVL) adopt a coiled-coil conformation. Residues 882–1012 (TIFFSDVVQF…DAVNTASRME (131 aa)) enclose the Guanylate cyclase domain. The disordered stretch occupies residues 1069-1088 (SNMRKRENTPSMARSITPEI).

Belongs to the adenylyl cyclase class-4/guanylyl cyclase family. In terms of tissue distribution, expressed in PHA sensory neurons.

The protein resides in the cell membrane. The enzyme catalyses GTP = 3',5'-cyclic GMP + diphosphate. Guanylate cyclase involved in the production of the second messenger cGMP. This chain is Receptor-type guanylate cyclase gcy-17, found in Caenorhabditis elegans.